Here is a 4377-residue protein sequence, read N- to C-terminus: E3 ubiquitin-protein ligase HUWE1 (4377 aa).

A phosphoserine mark is found at serine 648 and serine 649. 3 disordered regions span residues 706 to 758 (KADG…VVGT), 978 to 1001 (DEKA…AGSM), and 1018 to 1038 (TLAP…KSKI). The segment covering 725-735 (ASSEDEEEEEV) has biased composition (acidic residues). Residues 737–756 (AMQSFNSAQQNETEPNQQVV) show a composition bias toward polar residues. Position 740 is a phosphoserine (serine 740). Serine 1084 carries the phosphoserine modification. Residues 1291-1302 (LSKEKEGSRGEE) show a composition bias toward basic and acidic residues. Residues 1291-1320 (LSKEKEGSRGEEEAGQEEGGSRREPQVNQQ) are disordered. Positions 1316-1355 (QVNQQQLQQLMDMGFTREHAMEALLNTSTMEQATEYLLTH) constitute a UBA domain. Phosphoserine occurs at positions 1368, 1370, 1382, and 1395. Residues 1370 to 1389 (SEEDQMMRAIAMSLGQDIPM) enclose the UIM domain. The disordered stretch occupies residues 1396-1415 (PEEVACRKEEEERKAREKQE). In terms of domain architecture, WWE spans 1603–1680 (RAQMTKYLQS…ETGNRRPVML (78 aa)). The interval 1690–1733 (KNSKSSNGQELEKTLEESKETDIKHKENKGNDIPLALESTNTEK) is disordered. Positions 1699–1719 (ELEKTLEESKETDIKHKENKG) are enriched in basic and acidic residues. Residue serine 1907 is modified to Phosphoserine. 3 disordered regions span residues 2019–2065 (APAE…SKPL), 2262–2343 (SLFG…QEMQ), and 2355–2479 (LLER…ASPL). Residues 2022–2033 (ETSTTGTSQGEA) are compositionally biased toward polar residues. Position 2035 is a phosphothreonine (threonine 2035). Basic and acidic residues predominate over residues 2037 to 2057 (EETREGKKDKEGDRTSEEGKQ). Low complexity-rich tracts occupy residues 2262 to 2271 (SLFGSKSASS) and 2278 to 2291 (DAQG…SHQQ). Serine 2266 is subject to Phosphoserine. Position 2267 is an N6-acetyllysine (lysine 2267). 2 stretches are compositionally biased toward acidic residues: residues 2295 to 2306 (EPGEAEVQEEDH) and 2314 to 2325 (ADGDIMDGEAET). Phosphoserine occurs at positions 2362, 2365, and 2391. Over residues 2388-2398 (SNLSQASTLQA) the composition is skewed to polar residues. Residues 2408–2472 (DPEDEEEHTQ…SEMELDEDYP (65 aa)) are compositionally biased toward acidic residues. 3 positions are modified to phosphoserine: serine 2527, serine 2532, and serine 2535. Threonine 2554 bears the Phosphothreonine mark. 3 positions are modified to phosphoserine: serine 2584, serine 2595, and serine 2619. The span at 2704–2716 (IIDKGKEDKENRD) shows a compositional bias: basic and acidic residues. Disordered regions lie at residues 2704–2970 (IIDK…GVDP), 2991–3012 (IRPP…VGNP), and 3036–3059 (QQRA…MDPV). Positions 2717-2736 (QSAQCTVTKTNDSTEQNVSD) are enriched in polar residues. Residues 2738–2756 (TPMPDSYPTTPSSTDAPTS) are compositionally biased toward low complexity. Threonine 2751 is subject to Phosphothreonine. 3 stretches are compositionally biased toward polar residues: residues 2818–2835 (AETT…TSLS), 2847–2864 (AVSS…SLAS), and 2877–2890 (AGSS…SSTP). Serine 2826, serine 2833, serine 2835, serine 2861, serine 2887, and serine 2888 each carry phosphoserine. A Phosphothreonine modification is found at threonine 2889. Composition is skewed to low complexity over residues 2913 to 2932 (PPED…RDSA) and 2993 to 3007 (PPTR…SAPA). At serine 2918 the chain carries Phosphoserine. A phosphoserine mark is found at serine 3116, serine 3117, serine 3122, serine 3127, and serine 3135. Position 3149 is an omega-N-methylarginine (arginine 3149). Disordered regions lie at residues 3243-3266 (PKLS…SHEN), 3352-3383 (TQQR…SSSS), 3405-3429 (GKNS…SLEA), 3471-3514 (SEVQ…TTPV), and 3539-3566 (TPTT…EGGS). Residues 3355–3369 (RTKETNCESDRERGS) are compositionally biased toward basic and acidic residues. Positions 3370–3383 (KQACSPCSSQSSSS) are enriched in low complexity. Low complexity-rich tracts occupy residues 3475-3503 (TNSS…ATAP) and 3539-3552 (TPTT…TSTT). A phosphoserine mark is found at serine 3557, serine 3663, serine 3753, serine 3758, serine 3760, and serine 3761. The segment at 3738-3759 (TRRANKKAKQTGRLGSSGLGSA) is disordered. The span at 3749-3759 (GRLGSSGLGSA) shows a compositional bias: low complexity. 2 disordered regions span residues 3782–3850 (EGQR…LPLL) and 3897–3951 (RESK…SSSL). Polar residues predominate over residues 3794 to 3803 (TSESSNQSET). Residues serine 3810, serine 3818, and serine 3830 each carry the phosphoserine modification. Residues 3817 to 3828 (PSPSAQDTQSIV) are compositionally biased toward polar residues. Threonine 3833 is subject to Phosphothreonine. 2 stretches are compositionally biased toward basic and acidic residues: residues 3836 to 3845 (GEKEKEEKPP) and 3897 to 3918 (RESK…KDEP). Phosphoserine occurs at positions 3909 and 3922. The span at 3919 to 3928 (PPLSPAPLTP) shows a compositional bias: pro residues. 2 positions are modified to phosphothreonine: threonine 3927 and threonine 3930. The segment covering 3941 to 3951 (EPSSMHISSSL) has biased composition (polar residues). Positions 4041-4377 (SPEEMKNRLY…QECSEGFGLA (337 aa)) constitute an HECT domain. Residue tyrosine 4274 is modified to Phosphotyrosine. Cysteine 4344 (glycyl thioester intermediate) is an active-site residue.

This sequence belongs to the UPL family. TOM1/PTR1 subfamily. Interacts with isoform p19ARF of CDKN2A which strongly inhibits HUWE1 ubiquitin ligase activity. Interacts with MYCN, POLB and CDC6. Interacts with PA2G4. Interacts with NR1D1. Interacts with AMBRA1. Interacts with HAPSTR1. Interacts with HAPSTR2. In hepatocytes, interacts with PAQR3; the interaction promotes PPARA poylubiquitination and STUB1-mediated degradation. Phosphorylated on tyrosine; phosphorylation is probably required for its ability to inhibit TP53 transactivation. As to expression, widely expressed.

Its subcellular location is the cytoplasm. It localises to the nucleus. The protein resides in the mitochondrion. It carries out the reaction S-ubiquitinyl-[E2 ubiquitin-conjugating enzyme]-L-cysteine + [acceptor protein]-L-lysine = [E2 ubiquitin-conjugating enzyme]-L-cysteine + N(6)-ubiquitinyl-[acceptor protein]-L-lysine.. The protein operates within protein modification; protein ubiquitination. In terms of biological role, E3 ubiquitin-protein ligase which mediates ubiquitination and subsequent proteasomal degradation of target proteins. Regulates apoptosis by catalyzing the polyubiquitination and degradation of MCL1. Mediates monoubiquitination of DNA polymerase beta (POLB) at 'Lys-41', 'Lys-61' and 'Lys-81', thereby playing a role in base-excision repair. Also ubiquitinates the p53/TP53 tumor suppressor and core histones including H1, H2A, H2B, H3 and H4. Ubiquitinates MFN2 to negatively regulate mitochondrial fusion in response to decreased stearoylation of TFRC. Ubiquitination of MFN2 also takes place following induction of mitophagy; AMBRA1 acts as a cofactor for HUWE1-mediated ubiquitination. Regulates neural differentiation and proliferation by catalyzing the polyubiquitination and degradation of MYCN. May regulate abundance of CDC6 after DNA damage by polyubiquitinating and targeting CDC6 to degradation. Mediates polyubiquitination of PA2G4. Acts in concert with MYCBP2 to regulate the circadian clock gene expression by promoting the lithium-induced ubiquination and degradation of NR1D1. Binds to an upstream initiator-like sequence in the preprodynorphin gene. Mediates HAPSTR1 degradation, but is also a required cofactor in the pathway by which HAPSTR1 governs stress signaling. Acts as a regulator of the JNK and NF-kappa-B signaling pathways by mediating assembly of heterotypic 'Lys-63'-/'Lys-48'-linked branched ubiquitin chains that are then recognized by TAB2: HUWE1 mediates branching of 'Lys-48'-linked chains of substrates initially modified with 'Lys-63'-linked conjugates by TRAF6. 'Lys-63'-/'Lys-48'-linked branched ubiquitin chains protect 'Lys-63'-linkages from CYLD deubiquitination. Ubiquitinates PPARA in hepatocytes. The sequence is that of E3 ubiquitin-protein ligase HUWE1 (Huwe1) from Mus musculus (Mouse).